The sequence spans 211 residues: Urease accessory protein UreG (211 aa).

11–18 (GPVGAGKT) lines the GTP pocket.

The protein belongs to the SIMIBI class G3E GTPase family. UreG subfamily. In terms of assembly, homodimer. UreD, UreF and UreG form a complex that acts as a GTP-hydrolysis-dependent molecular chaperone, activating the urease apoprotein by helping to assemble the nickel containing metallocenter of UreC. The UreE protein probably delivers the nickel.

Its subcellular location is the cytoplasm. In terms of biological role, facilitates the functional incorporation of the urease nickel metallocenter. This process requires GTP hydrolysis, probably effectuated by UreG. The protein is Urease accessory protein UreG of Actinobacillus pleuropneumoniae serotype 7 (strain AP76).